A 328-amino-acid polypeptide reads, in one-letter code: DNA-directed RNA polymerase subunit alpha (328 aa).

The tract at residues 1–231 (MIYQMQMPAK…EHVTFFANFS (231 aa)) is alpha N-terminal domain (alpha-NTD). An alpha C-terminal domain (alpha-CTD) region spans residues 247–328 (DEFETMRRLL…MDITRYQMKG (82 aa)).

This sequence belongs to the RNA polymerase alpha chain family. Homodimer. The RNAP catalytic core consists of 2 alpha, 1 beta, 1 beta' and 1 omega subunit. When a sigma factor is associated with the core the holoenzyme is formed, which can initiate transcription.

It carries out the reaction RNA(n) + a ribonucleoside 5'-triphosphate = RNA(n+1) + diphosphate. Functionally, DNA-dependent RNA polymerase catalyzes the transcription of DNA into RNA using the four ribonucleoside triphosphates as substrates. This is DNA-directed RNA polymerase subunit alpha from Chlorobium luteolum (strain DSM 273 / BCRC 81028 / 2530) (Pelodictyon luteolum).